A 328-amino-acid polypeptide reads, in one-letter code: Protein-glutamine deamidase Cif (328 aa).

Residues 1-68 (MLEHGVMKIP…TNRTGENPMI (68 aa)) are disordered. The span at 52 to 63 (RSSSISNTNRTG) shows a compositional bias: polar residues. Active-site residues include Cys-156, His-211, and Gln-231.

It belongs to the Cif family.

Its subcellular location is the secreted. The protein localises to the host nucleus. The enzyme catalyses L-glutaminyl-[protein] + H2O = L-glutamyl-[protein] + NH4(+). Functionally, protein-glutamine deamidase effector that inhibits the host cell cycle and other key cellular processes such as the actin network and programmed-cell death. Acts by mediating the side chain deamidation of 'Gln-40' of host NEDD8, converting it to glutamate, thereby abolishing the activity of cullin-RING-based E3 ubiquitin-protein ligase complexes (CRL complexes). Inactivation of CRL complexes prevents ubiquitination and subsequent degradation of the cyclin-dependent kinase inhibitors CDKN1A/p21 and CDKN1B/p27, leading to G1 and G2 cell cycle arrests in host cells. Deamidation of 'Gln-40' of host NEDD8 also triggers macrophage-specific programmed cell death. Also able to catalyze deamidation of 'Gln-40' of host ubiquitin in vitro; however, NEDD8 constitutes the preferred substrate in vivo. Also regulates the host NF-kappa-B signaling via activation of MAPK/ERK cascade: activation of host MAPK/ERK cascade is independent of CRL complexes inhibition, suggesting that Cif has other host protein targets than NEDD8. This is Protein-glutamine deamidase Cif from Burkholderia pseudomallei (strain K96243).